Reading from the N-terminus, the 239-residue chain is 2,3,4,5-tetrahydropyridine-2,6-dicarboxylate N-acetyltransferase (239 aa).

Belongs to the transferase hexapeptide repeat family. DapH subfamily.

The catalysed reaction is (S)-2,3,4,5-tetrahydrodipicolinate + acetyl-CoA + H2O = L-2-acetamido-6-oxoheptanedioate + CoA. Its pathway is amino-acid biosynthesis; L-lysine biosynthesis via DAP pathway; LL-2,6-diaminopimelate from (S)-tetrahydrodipicolinate (acetylase route): step 1/3. Catalyzes the transfer of an acetyl group from acetyl-CoA to tetrahydrodipicolinate. The chain is 2,3,4,5-tetrahydropyridine-2,6-dicarboxylate N-acetyltransferase from Staphylococcus aureus (strain Newman).